Reading from the N-terminus, the 211-residue chain is Vascular-related unknown protein 1 (211 aa).

Over residues methionine 1–glutamine 12 the composition is skewed to polar residues. The interval methionine 1–tryptophan 40 is disordered. Basic and acidic residues predominate over residues asparagine 13–glutamate 37.

Expressed in vascular tissues of cotyledons, rosette leaves, sepals, petals, anther filaments. Expressed in roots, inflorescence stems and developing seeds.

The protein localises to the cytoplasm. It is found in the nucleus. Its function is as follows. Involved in the regulation of xylem development and growth. May regulate secondary wall formation during vascular development by modulation of brassinosteroid, gibberellin and auxin hormone signaling pathways. In Arabidopsis thaliana (Mouse-ear cress), this protein is Vascular-related unknown protein 1.